We begin with the raw amino-acid sequence, 351 residues long: Probable galacturonosyltransferase-like 4 (351 aa).

The Cytoplasmic portion of the chain corresponds to Met1–Tyr8. A helical; Signal-anchor for type II membrane protein transmembrane segment spans residues Thr9 to Val29. Residues Arg30–Glu351 are Lumenal-facing. Residues Asn96 and Asn203 are each glycosylated (N-linked (GlcNAc...) asparagine).

It belongs to the glycosyltransferase 8 family.

It is found in the golgi apparatus membrane. It functions in the pathway glycan metabolism; pectin biosynthesis. Functionally, may be involved in pectin and/or xylans biosynthesis in cell walls. This is Probable galacturonosyltransferase-like 4 (GATL4) from Arabidopsis thaliana (Mouse-ear cress).